Reading from the N-terminus, the 537-residue chain is Intercellular adhesion molecule 1 (537 aa).

Residues 1-27 (MASTRAKPTLPLLLALVTVVIPGPGDA) form the signal peptide. The Extracellular portion of the chain corresponds to 28–485 (QVSIHPREAF…LTVLYHSQNN (458 aa)). Ig-like C2-type domains are found at residues 41 to 102 (GGSV…QSSA) and 127 to 195 (GKDL…LDLR). An N-linked (GlcNAc...) asparagine glycan is attached at asparagine 47. Cystine bridges form between cysteine 48–cysteine 91, cysteine 52–cysteine 95, and cysteine 134–cysteine 188. A Cell attachment site; atypical motif is present at residues 151–153 (RGE). Positions 179–181 (RGD) match the Cell attachment site motif. N-linked (GlcNAc...) asparagine glycans are attached at residues asparagine 185, asparagine 204, asparagine 267, asparagine 311, asparagine 362, asparagine 388, asparagine 409, asparagine 456, and asparagine 469. The region spanning 232 to 299 (GTQQKLFCSL…LRCVLELADQ (68 aa)) is the Ig-like C2-type 3 domain. Cysteines 239 and 292 form a disulfide. An Ig-like C2-type 4 domain is found at 327-381 (GSQVTVKCEAHSGSKVVLLSGVEPRPPTPQVQFTLNASSEDHKRSFFCSAALEVA). A disulfide bond links cysteine 334 and cysteine 374. Disulfide bonds link cysteine 406–cysteine 422, cysteine 422–cysteine 461, and cysteine 434–cysteine 461. Residues 415–468 (GSQQTLKCQAWGNPSPKMTCRRKADGALLPIGVVKSVKQEMNGTYVCHAFSSHG) form the Ig-like C2-type 5 domain. The helical transmembrane segment at 486–509 (WTIIILVPVLLVIVGLVMAASYVY) threads the bilayer. Residues 510–537 (NRQRKIRIYKLQKAQEEAIKLKGQAPPP) lie on the Cytoplasmic side of the membrane.

Belongs to the immunoglobulin superfamily. ICAM family. Homodimer. Interacts with MUC1 and promotes cell aggregation in epithelial cells. Interacts with ARHGEF26/SGEF. Interacts (on T cell side) with CD81, CD247 and CD9 at immunological synapses between antigen-presenting cells and T cells. Monoubiquitinated, which is promoted by MARCH9 and leads to endocytosis. Expressed at low level on a subpopulation of lymphocytes, macrophages, and endothelial cells, but is strongly induced on these cells, and on fibroblasts and epithelial cells.

It localises to the membrane. In terms of biological role, ICAM proteins are ligands for the leukocyte adhesion protein LFA-1 (integrin alpha-L/beta-2). During leukocyte trans-endothelial migration, ICAM1 engagement promotes the assembly of endothelial apical cups through ARHGEF26/SGEF and RHOG activation. The polypeptide is Intercellular adhesion molecule 1 (Icam1) (Mus musculus (Mouse)).